A 158-amino-acid chain; its full sequence is MAGTIEALVPGGQATPGPPLGPELGPTPVDVQDVVAQINDETAAFDGMEVPVTVEYDDDGSFTIEVGVPPTAELIKDEAGFETGSGEPQVDFVADMSIEQVKKVAEQKSTDLLAYDVKNAAKEVGGTCASLGVTIEGEDARTFDDRVDAGDYDDVLDE.

The interval Met1 to Pro28 is disordered.

The protein belongs to the universal ribosomal protein uL11 family. As to quaternary structure, part of the ribosomal stalk of the 50S ribosomal subunit. Interacts with L10 and the large rRNA to form the base of the stalk. L10 forms an elongated spine to which L12 dimers bind in a sequential fashion forming a multimeric L10(L12)X complex.

Functionally, forms part of the ribosomal stalk which helps the ribosome interact with GTP-bound translation factors. The sequence is that of Large ribosomal subunit protein uL11 from Halorubrum lacusprofundi (strain ATCC 49239 / DSM 5036 / JCM 8891 / ACAM 34).